The following is a 390-amino-acid chain: tRNA(Met) cytidine acetate ligase (390 aa).

Residues 7–20 (ITEY…HIYH), Gly-101, Asn-152, and Arg-177 each bind ATP.

This sequence belongs to the TmcAL family.

It is found in the cytoplasm. The catalysed reaction is cytidine(34) in elongator tRNA(Met) + acetate + ATP = N(4)-acetylcytidine(34) in elongator tRNA(Met) + AMP + diphosphate. Catalyzes the formation of N(4)-acetylcytidine (ac(4)C) at the wobble position of elongator tRNA(Met), using acetate and ATP as substrates. First activates an acetate ion to form acetyladenylate (Ac-AMP) and then transfers the acetyl group to tRNA to form ac(4)C34. The polypeptide is tRNA(Met) cytidine acetate ligase (Leuconostoc mesenteroides subsp. mesenteroides (strain ATCC 8293 / DSM 20343 / BCRC 11652 / CCM 1803 / JCM 6124 / NCDO 523 / NBRC 100496 / NCIMB 8023 / NCTC 12954 / NRRL B-1118 / 37Y)).